The following is a 433-amino-acid chain: Acetyl-CoA-benzylalcohol acetyltransferase (433 aa).

Active-site proton acceptor residues include His152 and Asp377.

The protein belongs to the plant acyltransferase family. The N-terminus is blocked. As to expression, expressed in petals, style, sepals and stamens. Very low expression in stigma and not detected in leaves.

The catalysed reaction is benzyl alcohol + acetyl-CoA = benzyl acetate + CoA. The enzyme catalyses (E)-cinnamyl alcohol + acetyl-CoA = (E)-cinnamyl acetate + CoA. Involved in the biosynthesis of benzyl acetate, a major constituent of the floral scent. Can use benzylalcohol, cinnamylalcohol, 3-cis-hexene-1-ol or heptanol as substrates. Has some activity with 2-phenylethanol and 2-naphtalene-ethanol, but no activity with linalool, 2-hydroxybenzylalcohol, 3-hydroxybenzylalcohol or 4-hydroxybenzylalcohol. This is Acetyl-CoA-benzylalcohol acetyltransferase (BEAT) from Clarkia breweri (Fairy fans).